We begin with the raw amino-acid sequence, 310 residues long: Ribosomal RNA small subunit methyltransferase H (310 aa).

S-adenosyl-L-methionine is bound by residues 33–35, aspartate 53, phenylalanine 79, aspartate 100, and glutamine 107; that span reads AGH.

This sequence belongs to the methyltransferase superfamily. RsmH family.

It is found in the cytoplasm. It carries out the reaction cytidine(1402) in 16S rRNA + S-adenosyl-L-methionine = N(4)-methylcytidine(1402) in 16S rRNA + S-adenosyl-L-homocysteine + H(+). Functionally, specifically methylates the N4 position of cytidine in position 1402 (C1402) of 16S rRNA. In Clostridium perfringens (strain 13 / Type A), this protein is Ribosomal RNA small subunit methyltransferase H.